A 312-amino-acid chain; its full sequence is Porphobilinogen deaminase (312 aa).

S-(dipyrrolylmethanemethyl)cysteine is present on cysteine 241.

Belongs to the HMBS family. As to quaternary structure, monomer. The cofactor is dipyrromethane.

It catalyses the reaction 4 porphobilinogen + H2O = hydroxymethylbilane + 4 NH4(+). Its pathway is porphyrin-containing compound metabolism; protoporphyrin-IX biosynthesis; coproporphyrinogen-III from 5-aminolevulinate: step 2/4. In terms of biological role, tetrapolymerization of the monopyrrole PBG into the hydroxymethylbilane pre-uroporphyrinogen in several discrete steps. In Cytophaga hutchinsonii (strain ATCC 33406 / DSM 1761 / CIP 103989 / NBRC 15051 / NCIMB 9469 / D465), this protein is Porphobilinogen deaminase.